The sequence spans 806 residues: Portal protein (806 aa).

The tract at residues 337-380 is interaction with Cargo protein 1; it reads SKRKILKVKSYDPETGEEEWNFYPENYVVNKEAGEEVQSFWVNE. Residues 783 to 792 show a composition bias toward basic and acidic residues; it reads KKKAETDASI. Residues 783–806 form a disordered region; the sequence is KKKAETDASIKRQALRKKSSTTNK. Basic residues predominate over residues 795-806; sequence QALRKKSSTTNK.

Homododecamer. Interacts with the Cargo protein 1. Interacts with the major capsid protein.

It is found in the virion. Functionally, forms the portal vertex of the capsid. Probably involved in head assembly, genome packaging, tail attachment, and genome ejection. This chain is Portal protein, found in Bacteroides phage crAss001 (Bacteroides phage PhiCrAss001).